The sequence spans 562 residues: uncharacterized protein (562 aa).

5 helical membrane-spanning segments follow: residues 10–27 (IYPE…YWVG), 34–53 (FSLG…GQFD), 63–85 (IFFL…QGIA), 92–114 (ALFA…KIAG), and 155–177 (FSVI…AIVL). 2 consecutive RCK C-terminal domains span residues 204–288 (TENA…HPDS) and 290–377 (DETQ…QLGV). A run of 6 helical transmembrane segments spans residues 387–404 (VAFW…GSLV), 408–430 (GNLP…FSWV), 443–465 (PTVW…ISAG), 475–497 (LGFS…AALV), 504–526 (FHPA…LGMI), and 539–561 (YTIT…ILIL).

Belongs to the AAE transporter (TC 2.A.81) family.

The protein localises to the cell membrane. This is an uncharacterized protein from Shewanella oneidensis (strain ATCC 700550 / JCM 31522 / CIP 106686 / LMG 19005 / NCIMB 14063 / MR-1).